The primary structure comprises 99 residues: Co-chaperonin GroES (99 aa).

Belongs to the GroES chaperonin family. In terms of assembly, heptamer of 7 subunits arranged in a ring. Interacts with the chaperonin GroEL.

The protein localises to the cytoplasm. Together with the chaperonin GroEL, plays an essential role in assisting protein folding. The GroEL-GroES system forms a nano-cage that allows encapsulation of the non-native substrate proteins and provides a physical environment optimized to promote and accelerate protein folding. GroES binds to the apical surface of the GroEL ring, thereby capping the opening of the GroEL channel. This is Co-chaperonin GroES from Methylacidiphilum infernorum (isolate V4) (Methylokorus infernorum (strain V4)).